A 308-amino-acid polypeptide reads, in one-letter code: MKPRIVYRPLHGILLLDKPAGLSSNNALQAARRLLRAEKGGHTGSLDPLATGLLPLCFGEATKIAGLLLGSAKAYDAEIVLGVTTDTDDADGQPLRERAVPDLSEADLQAALAPFIGRIQQQAPIYSALKQGGEPLYAKARRGERIEAPVREVDVQAIDVLGYSAPGLRLRVTCGSGTYIRSLARDLGEVLGCGAHIASLRRLWVEPFRAPQMITLEALSAALEAGTEARTLLLPIEAGLAGFARIVLDQTHAARFRMGQRLRDAAFPPGQVAVFGPDGTPSGLGLVDADGRLSPQRLFNGLNEIPAC.

Aspartate 47 (nucleophile) is an active-site residue.

The protein belongs to the pseudouridine synthase TruB family. Type 1 subfamily.

It carries out the reaction uridine(55) in tRNA = pseudouridine(55) in tRNA. Functionally, responsible for synthesis of pseudouridine from uracil-55 in the psi GC loop of transfer RNAs. The protein is tRNA pseudouridine synthase B of Xanthomonas euvesicatoria pv. vesicatoria (strain 85-10) (Xanthomonas campestris pv. vesicatoria).